A 424-amino-acid chain; its full sequence is MSVAVLAFGLNHTSAPVSVRERVSMPVDLVKPALAGLRSAFGGAVREAAILSTCNRTEVYCAADAAVAEQLPIWLADHHCMEAGSLHPHLYRLHQNDAVRHAFRVASGLDSMVLGEPQILGQMKDAVRAAEEAGSLGTLLHQLFQRTFAVAKEVRSQTEIGAHSVSMAAAAVRLAERVFGDLGQARTLFIGAGEMIELCATHFAAQHPRSMVVANRTAERAESLAGRFSAGTMKLADLTERLAEFDVVVSCTASSLPILGLGMVERATRQRRHRPMVMIDLAVPRDIEPEVGRLDDVYLYSVDDLGRLVQSGTDARRAAVVQAEAIIETRVQGFMHWMQSREVVPVIRGLHQAAEDVQAAELERARRLLARGESPEAVLEQLAHGLTQKYLHGPLAALNRSAGDERKQLLAWMPRLFPGRDSRR.

Residues Thr53–Arg56, Ser111, Glu116–Gln118, and Gln122 contribute to the substrate site. Cys54 (nucleophile) is an active-site residue. Gly191 to Ile196 serves as a coordination point for NADP(+).

Belongs to the glutamyl-tRNA reductase family. Homodimer.

The catalysed reaction is (S)-4-amino-5-oxopentanoate + tRNA(Glu) + NADP(+) = L-glutamyl-tRNA(Glu) + NADPH + H(+). It functions in the pathway porphyrin-containing compound metabolism; protoporphyrin-IX biosynthesis; 5-aminolevulinate from L-glutamyl-tRNA(Glu): step 1/2. Catalyzes the NADPH-dependent reduction of glutamyl-tRNA(Glu) to glutamate 1-semialdehyde (GSA). The polypeptide is Glutamyl-tRNA reductase (Bordetella avium (strain 197N)).